The sequence spans 1099 residues: R3H domain-containing protein 1 (1099 aa).

Residues 111–146 (SFEKEEKPSKDEAEKEKASDKLPRKMLSRDSSQEYT) are disordered. Positions 112–142 (FEKEEKPSKDEAEKEKASDKLPRKMLSRDSS) are enriched in basic and acidic residues. The 64-residue stretch at 168-231 (RMMLLKLEQE…SVIVNKTSNT (64 aa)) folds into the R3H domain. Ser-187 and Ser-262 each carry phosphoserine. The 71-residue stretch at 232-302 (RIPDQKFNEH…ARDRIFSQDS (71 aa)) folds into the SUZ domain. The segment at 267–287 (DNQMRIRLKDDRRSKSIEERE) is disordered. The residue at position 302 (Ser-302) is a Phosphoserine. Positions 331-370 (RVNKDASGRSTNSHQSSTENELKYSEPRPWSSTDSDSSLR) are disordered. Polar residues-rich tracts occupy residues 338 to 349 (GRSTNSHQSSTE) and 360 to 370 (WSSTDSDSSLR). 3 positions are modified to phosphoserine: Ser-380, Ser-381, and Ser-393. 4 disordered regions span residues 387–439 (VLTR…SSHG), 490–537 (QTGQ…AANH), 583–625 (YIMT…HPVS), and 797–825 (EQVQ…PPPP). Positions 391-422 (GDSSGSSKSIGRLSKTGSESSGSVGSSTGSLS) are enriched in low complexity. Pro residues-rich tracts occupy residues 519–532 (PGPP…PPQQ) and 588–611 (APPP…PGQP). Over residues 797–817 (EQVQFPRTTSPCSSQQLQGHQ) the composition is skewed to polar residues. Residue Arg-929 is modified to Asymmetric dimethylarginine; alternate. Residue Arg-929 is modified to Omega-N-methylarginine; alternate. Residues 941 to 977 (PPAVLHGHIPNQQGQPGSRHGNRGRRQAKKAASTDLG) are disordered. Residues 960-969 (HGNRGRRQAK) are compositionally biased toward basic residues. Ser-973 is modified (phosphoserine).

In Homo sapiens (Human), this protein is R3H domain-containing protein 1 (R3HDM1).